We begin with the raw amino-acid sequence, 200 residues long: NADH-quinone oxidoreductase subunit C (200 aa).

It belongs to the complex I 30 kDa subunit family. In terms of assembly, NDH-1 is composed of 14 different subunits. Subunits NuoB, C, D, E, F, and G constitute the peripheral sector of the complex.

It is found in the cell inner membrane. It catalyses the reaction a quinone + NADH + 5 H(+)(in) = a quinol + NAD(+) + 4 H(+)(out). In terms of biological role, NDH-1 shuttles electrons from NADH, via FMN and iron-sulfur (Fe-S) centers, to quinones in the respiratory chain. The immediate electron acceptor for the enzyme in this species is believed to be ubiquinone. Couples the redox reaction to proton translocation (for every two electrons transferred, four hydrogen ions are translocated across the cytoplasmic membrane), and thus conserves the redox energy in a proton gradient. The chain is NADH-quinone oxidoreductase subunit C from Burkholderia multivorans (strain ATCC 17616 / 249).